The chain runs to 647 residues: Starch synthase 1, chloroplastic/amyloplastic (647 aa).

A chloroplast-targeting transit peptide spans 1–41; it reads MAATGVGAGCLAPSVRLRADPATAARASACVVRARLRRVAR. Residues 66–91 show a composition bias toward pro residues; sequence PLVPGFLAPPPPAPAQSPAPTQPPLP. The tract at residues 66–95 is disordered; it reads PLVPGFLAPPPPAPAQSPAPTQPPLPDAGV. Lysine 153 is an ADP-alpha-D-glucose binding site.

This sequence belongs to the glycosyltransferase 1 family. Bacterial/plant glycogen synthase subfamily.

Its subcellular location is the plastid. The protein resides in the chloroplast. It is found in the amyloplast. The enzyme catalyses [(1-&gt;4)-alpha-D-glucosyl](n) + ADP-alpha-D-glucose = [(1-&gt;4)-alpha-D-glucosyl](n+1) + ADP + H(+). It participates in glycan biosynthesis; starch biosynthesis. This is Starch synthase 1, chloroplastic/amyloplastic (WSSI-2) from Triticum aestivum (Wheat).